Consider the following 144-residue polypeptide: Nucleoside diphosphate kinase (144 aa).

The ATP site is built by lysine 5, phenylalanine 53, arginine 81, threonine 87, arginine 98, and asparagine 108. The Pros-phosphohistidine intermediate role is filled by histidine 111.

The protein belongs to the NDK family. Mg(2+) is required as a cofactor.

The enzyme catalyses a 2'-deoxyribonucleoside 5'-diphosphate + ATP = a 2'-deoxyribonucleoside 5'-triphosphate + ADP. The catalysed reaction is a ribonucleoside 5'-diphosphate + ATP = a ribonucleoside 5'-triphosphate + ADP. Functionally, major role in the synthesis of nucleoside triphosphates other than ATP. The ATP gamma phosphate is transferred to the NDP beta phosphate via a ping-pong mechanism, using a phosphorylated active-site intermediate. The polypeptide is Nucleoside diphosphate kinase (Solanum lycopersicum (Tomato)).